Here is a 94-residue protein sequence, read N- to C-terminus: Phosphoribosyl-ATP pyrophosphatase (94 aa).

It belongs to the PRA-PH family.

The protein localises to the cytoplasm. The catalysed reaction is 1-(5-phospho-beta-D-ribosyl)-ATP + H2O = 1-(5-phospho-beta-D-ribosyl)-5'-AMP + diphosphate + H(+). Its pathway is amino-acid biosynthesis; L-histidine biosynthesis; L-histidine from 5-phospho-alpha-D-ribose 1-diphosphate: step 2/9. The chain is Phosphoribosyl-ATP pyrophosphatase from Pyrobaculum arsenaticum (strain DSM 13514 / JCM 11321 / PZ6).